Consider the following 170-residue polypeptide: Cyclic pyranopterin monophosphate synthase (170 aa).

Residues 89–91 (LCH) and 125–126 (ME) contribute to the substrate site. Residue aspartate 140 is part of the active site.

This sequence belongs to the MoaC family. As to quaternary structure, homohexamer; trimer of dimers.

It catalyses the reaction (8S)-3',8-cyclo-7,8-dihydroguanosine 5'-triphosphate = cyclic pyranopterin phosphate + diphosphate. Its pathway is cofactor biosynthesis; molybdopterin biosynthesis. Its function is as follows. Catalyzes the conversion of (8S)-3',8-cyclo-7,8-dihydroguanosine 5'-triphosphate to cyclic pyranopterin monophosphate (cPMP). The polypeptide is Cyclic pyranopterin monophosphate synthase (Streptomyces coelicolor (strain ATCC BAA-471 / A3(2) / M145)).